Here is a 323-residue protein sequence, read N- to C-terminus: Fructose-1,6-bisphosphatase class 1 (323 aa).

4 residues coordinate Mg(2+): Glu84, Asp103, Leu105, and Asp106. Residues 106 to 109 (DGSS), Asn198, and Lys264 contribute to the substrate site. Residue Glu270 participates in Mg(2+) binding.

Belongs to the FBPase class 1 family. In terms of assembly, homotetramer. It depends on Mg(2+) as a cofactor.

It localises to the cytoplasm. It carries out the reaction beta-D-fructose 1,6-bisphosphate + H2O = beta-D-fructose 6-phosphate + phosphate. Its pathway is carbohydrate biosynthesis; gluconeogenesis. This chain is Fructose-1,6-bisphosphatase class 1, found in Cellvibrio japonicus (strain Ueda107) (Pseudomonas fluorescens subsp. cellulosa).